Consider the following 468-residue polypeptide: Chromatin assembly factor 1 subunit B (468 aa).

5 WD repeats span residues H11–N52, H69–E108, T143–G182, D185–V224, and I371–E413.

Belongs to the WD repeat HIR1 family. As to quaternary structure, component of chromatin assembly factor 1 (CAF-1), composed of MSI1/p50, CAC2/p60 and CAC1/p90. Interacts with RTT106.

It localises to the nucleus. In terms of biological role, acts as a component of the histone chaperone complex chromatin assembly factor 1 (CAF-1), which assembles histone octamers onto replicating DNA. It performs the first step of the nucleosome assembly process, bringing newly synthesized histones H3 and H4 to replicating DNA; histones H2A/H2B can bind to this chromatin precursor subsequent to DNA replication to complete the histone octamer. Plays a role in the maintenance of heterochromatin. In Saccharomyces cerevisiae (strain ATCC 204508 / S288c) (Baker's yeast), this protein is Chromatin assembly factor 1 subunit B (CAC2).